A 1146-amino-acid chain; its full sequence is DNA polymerase II large subunit (1146 aa).

It belongs to the archaeal DNA polymerase II family. As to quaternary structure, heterodimer of a large subunit and a small subunit.

The enzyme catalyses DNA(n) + a 2'-deoxyribonucleoside 5'-triphosphate = DNA(n+1) + diphosphate. It carries out the reaction Exonucleolytic cleavage in the 3'- to 5'-direction to yield nucleoside 5'-phosphates.. Functionally, possesses two activities: a DNA synthesis (polymerase) and an exonucleolytic activity that degrades single-stranded DNA in the 3'- to 5'-direction. Has a template-primer preference which is characteristic of a replicative DNA polymerase. The polypeptide is DNA polymerase II large subunit (Methanosarcina barkeri (strain Fusaro / DSM 804)).